Consider the following 349-residue polypeptide: Short chain dehydrogenase/reductase dpfgH (349 aa).

Residues 9–31 (LCIRVVDSLYGSFLYLPLAILFL) traverse the membrane as a helical segment. Residues I65, R89, and D115 each coordinate NADP(+). N118 is a glycosylation site (N-linked (GlcNAc...) asparagine). NADP(+)-binding residues include N142 and K164. Active-site proton donor residues include S191 and S192. Residues Y223 and K227 each contribute to the NADP(+) site. The Proton acceptor role is filled by Y223. The Lowers pKa of active site Tyr role is filled by K227. Residue N334 is glycosylated (N-linked (GlcNAc...) asparagine).

It belongs to the short-chain dehydrogenases/reductases (SDR) family.

It is found in the membrane. It functions in the pathway secondary metabolite biosynthesis; terpenoid biosynthesis. In terms of biological role, short chain dehydrogenase/reductase; part of the gene cluster that mediates the biosynthesis of diterpenoid pyrones. The first step of the pathway is the synthesis of the alpha-pyrone moiety by the polyketide synthase dpfgA via condensation of one acetyl-CoA starter unit with 3 malonyl-CoA units and 2 methylations. The alpha-pyrone is then combined with geranylgeranyl pyrophosphate (GGPP) formed by the GGPP synthase dpfgD through the action of the prenyltransferase dpfgC to yield a linear alpha-pyrone diterpenoid. Subsequent steps in the diterpenoid pyrone biosynthetic pathway involve the decalin core formation, which is initiated by the epoxidation of the C10-C11 olefin by the FAD-dependent oxidoreductase dpfgE, and is followed by a cyclization cascade catalyzed by the terpene cyclase dpfgB. The short chain dehydrogenase/reductase dpfgG then oxidizes the 8S hydroxy group to a ketone and the short chain dehydrogenase/reductase dpfgH reduces the ketone to the 8R hydroxy group to yield higginsianin B. Higginsianin B is further methylated by the methyltransferase dpfgI to produce the intermediate named FDDP B. The cytochrome P450 monooxygenase dfgpJ then catalyzes a three-step oxidation at C-27 to generate a carboxylic acid as well as C-26 hydroxylation. Finally, methyltransferase dpfgK methylates the carboxylic acid generated by dpfgJ, yielding the final diterpenoid pyrones from the pathway which were named FDDP D and FDDP E. This chain is Short chain dehydrogenase/reductase dpfgH, found in Gibberella zeae (strain ATCC MYA-4620 / CBS 123657 / FGSC 9075 / NRRL 31084 / PH-1) (Wheat head blight fungus).